We begin with the raw amino-acid sequence, 446 residues long: 4-aminobutyrate aminotransferase (446 aa).

K291 is modified (N6-(pyridoxal phosphate)lysine).

This sequence belongs to the class-III pyridoxal-phosphate-dependent aminotransferase family. It depends on pyridoxal 5'-phosphate as a cofactor.

It carries out the reaction 4-aminobutanoate + 2-oxoglutarate = succinate semialdehyde + L-glutamate. The enzyme catalyses (S)-3-amino-2-methylpropanoate + 2-oxoglutarate = 2-methyl-3-oxopropanoate + L-glutamate. It functions in the pathway amino-acid degradation; 4-aminobutanoate degradation. This chain is 4-aminobutyrate aminotransferase (gabT), found in Mycobacterium leprae (strain TN).